The following is a 104-amino-acid chain: Glycine-rich protein (104 aa).

Residues 1-18 form the signal peptide; that stretch reads MKSMIAAILFALVATSLA.

It belongs to the non-disulfide-bridged peptide (NDBP) superfamily. In terms of tissue distribution, expressed by the venom gland.

The protein localises to the secreted. This chain is Glycine-rich protein, found in Lychas mucronatus (Chinese swimming scorpion).